A 274-amino-acid chain; its full sequence is 2-dehydro-3-deoxyphosphooctonate aldolase (274 aa).

Belongs to the KdsA family.

The protein localises to the cytoplasm. It carries out the reaction D-arabinose 5-phosphate + phosphoenolpyruvate + H2O = 3-deoxy-alpha-D-manno-2-octulosonate-8-phosphate + phosphate. Its pathway is carbohydrate biosynthesis; 3-deoxy-D-manno-octulosonate biosynthesis; 3-deoxy-D-manno-octulosonate from D-ribulose 5-phosphate: step 2/3. It functions in the pathway bacterial outer membrane biogenesis; lipopolysaccharide biosynthesis. The polypeptide is 2-dehydro-3-deoxyphosphooctonate aldolase (Rickettsia rickettsii (strain Iowa)).